The primary structure comprises 188 residues: Peptidyl-tRNA hydrolase (188 aa).

TRNA is bound at residue Tyr-16. The Proton acceptor role is filled by His-21. Residues Phe-66, Asn-68, and Asn-114 each contribute to the tRNA site.

The protein belongs to the PTH family. In terms of assembly, monomer.

The protein resides in the cytoplasm. The catalysed reaction is an N-acyl-L-alpha-aminoacyl-tRNA + H2O = an N-acyl-L-amino acid + a tRNA + H(+). Hydrolyzes ribosome-free peptidyl-tRNAs (with 1 or more amino acids incorporated), which drop off the ribosome during protein synthesis, or as a result of ribosome stalling. Functionally, catalyzes the release of premature peptidyl moieties from peptidyl-tRNA molecules trapped in stalled 50S ribosomal subunits, and thus maintains levels of free tRNAs and 50S ribosomes. The chain is Peptidyl-tRNA hydrolase from Geobacter sp. (strain M21).